The chain runs to 295 residues: MLIEFTKMHGLGNDFMVIDLVTQRLDLTKDLVQLLGDRHLGIGFDQLLVVEPPMRPDVDFSYRIFNTDGTEVEQCGNGARCFARFVQARKLSFKQRLRVETASGIISLTTDRYGWVEVDMGKPKFEPSEIPFTPRAITKIQNAYHLDVNGTPVQLYVANMGNPHAVIKVDDVLDADVETLGKAIESHPAFPERVNVGFMQIMNQRHIRLRVFERGVGETQACGTGACAAVAIGIREGWLDEGEDVRAQLYGGSMVIKWQPGYSVMMTGPTAFVYEGVFSPDGLMAQAGIKPNPES.

Substrate contacts are provided by Asn-13, Gln-46, and Asn-66. Cys-75 serves as the catalytic Proton donor. Substrate is bound by residues 76–77 (GN), Asn-162, Asn-195, and 213–214 (ER). Cys-222 serves as the catalytic Proton acceptor. 223 to 224 (GT) lines the substrate pocket.

It belongs to the diaminopimelate epimerase family. In terms of assembly, homodimer.

It localises to the cytoplasm. The catalysed reaction is (2S,6S)-2,6-diaminopimelate = meso-2,6-diaminopimelate. The protein operates within amino-acid biosynthesis; L-lysine biosynthesis via DAP pathway; DL-2,6-diaminopimelate from LL-2,6-diaminopimelate: step 1/1. In terms of biological role, catalyzes the stereoinversion of LL-2,6-diaminopimelate (L,L-DAP) to meso-diaminopimelate (meso-DAP), a precursor of L-lysine and an essential component of the bacterial peptidoglycan. This Psychrobacter cryohalolentis (strain ATCC BAA-1226 / DSM 17306 / VKM B-2378 / K5) protein is Diaminopimelate epimerase.